An 85-amino-acid polypeptide reads, in one-letter code: Insecticidal toxin Vn1 (85 aa).

An N-terminal signal peptide occupies residues 1 to 23 (MFLYRLICLFILICIITVDISTS). Residues Cys71 and Cys84 are joined by a disulfide bond.

As to expression, highly expressed in the venom apparatus, and weakly expressed in residual body.

The protein localises to the secreted. In terms of biological role, endoparasitoid venom toxin that exhibits insecticidal activity against Tenebrio molitor pupae. Impacts genes related to immune response, environmental information processing, metabolism, and response to external stimuli in T.molitor, suggesting its involvement in the intricate parasitoid wasp-host interaction. The protein is Insecticidal toxin Vn1 of Aphidius gifuensis (Parasitoid wasp).